The following is a 155-amino-acid chain: Large ribosomal subunit protein uL22c (155 aa).

The protein belongs to the universal ribosomal protein uL22 family. Part of the 50S ribosomal subunit.

It is found in the plastid. It localises to the chloroplast. In terms of biological role, this protein binds specifically to 23S rRNA. The globular domain of the protein is located near the polypeptide exit tunnel on the outside of the subunit, while an extended beta-hairpin is found that lines the wall of the exit tunnel in the center of the 70S ribosome. This Atropa belladonna (Belladonna) protein is Large ribosomal subunit protein uL22c (rpl22).